The primary structure comprises 351 residues: MTIDAALADKIRRTPKAELHVHIEGTLEPELIFRLAQRNHVNLPYPSVEALRAAYAFTDLQSFLDIYYAGASVLLTEEDFFDMTMDYVKRAVADNVRHAEIFFDPQTHTARGVPIGTVIDGISDALAQARTEYDFSSSLILCFLRHLSEEDAFATLEAALPYRDRFVGVGLDSSEKGNPPEKFARVFTRARELGLHLVAHAGEEGPAQYVTDALDILKVERIDHGVRSIDDAALIERLARERVALTVCPLSNQKLKVHPDLSEHPLKRMLDAGVAITLHSDDPAYFGGYMNANWEATFAALPLDAADAHKLARNSFEAAFLPPMQKAEFLAEVDHFWSATPTSPPATAPAA.

Residues His-20, His-22, and His-200 each coordinate Zn(2+). Residue Glu-203 is the Proton donor of the active site. Asp-281 serves as a coordination point for Zn(2+). Asp-282 lines the substrate pocket.

It belongs to the metallo-dependent hydrolases superfamily. Adenosine and AMP deaminases family. Adenine deaminase type 2 subfamily. Requires Zn(2+) as cofactor.

It carries out the reaction adenine + H2O + H(+) = hypoxanthine + NH4(+). Its function is as follows. Catalyzes the hydrolytic deamination of adenine to hypoxanthine. Plays an important role in the purine salvage pathway and in nitrogen catabolism. The sequence is that of Adenine deaminase from Cupriavidus pinatubonensis (strain JMP 134 / LMG 1197) (Cupriavidus necator (strain JMP 134)).